The following is a 526-amino-acid chain: ATP synthase subunit alpha (526 aa).

ATP is bound at residue 171–178 (GDRQVGKT).

It belongs to the ATPase alpha/beta chains family. In terms of assembly, F-type ATPases have 2 components, CF(1) - the catalytic core - and CF(0) - the membrane proton channel. CF(1) has five subunits: alpha(3), beta(3), gamma(1), delta(1), epsilon(1). CF(0) has three main subunits: a(1), b(2) and c(9-12). The alpha and beta chains form an alternating ring which encloses part of the gamma chain. CF(1) is attached to CF(0) by a central stalk formed by the gamma and epsilon chains, while a peripheral stalk is formed by the delta and b chains.

The protein resides in the cell inner membrane. It catalyses the reaction ATP + H2O + 4 H(+)(in) = ADP + phosphate + 5 H(+)(out). Functionally, produces ATP from ADP in the presence of a proton gradient across the membrane. The alpha chain is a regulatory subunit. This is ATP synthase subunit alpha from Azobacteroides pseudotrichonymphae genomovar. CFP2.